Reading from the N-terminus, the 414-residue chain is Cytosolic-abundant heat soluble protein 89226 (414 aa).

Basic and acidic residues-rich tracts occupy residues 27 to 45 (IGED…DKRP) and 69 to 84 (AGQR…ERLR). The disordered stretch occupies residues 27–155 (IGEDRGKEDP…SNPGMNNGMT (129 aa)). Composition is skewed to low complexity over residues 86-101 (SRSS…VEPS) and 120-134 (SSNR…SSSD). Positions 142–155 (ASRNSNPGMNNGMT) are enriched in polar residues. CAHS motif regions lie at residues 305 to 323 (YRNA…LERQ) and 342 to 360 (QQQE…LEQE). Residues 341-376 (RQQQEIRLEAEYAMRALEQERVNARAALDQAMASTN) are a coiled coil. Residues 388–405 (THSQGRVTTTSESRTSQA) show a composition bias toward polar residues. Positions 388 to 414 (THSQGRVTTTSESRTSQARGPATAAVI) are disordered.

This sequence belongs to the Cytosolic-abundant heat soluble protein (CAHS) family.

Its subcellular location is the cytoplasm. Its function is as follows. CAHS proteins are cytosolic heat soluble proteins that seem to contribute to the anhydrobiosis in tardigrades, but their specific mechanisms are yet to be identified. It is possible that protection during anhydrobiosis might occur via the stabilization of vitrifying small molecules such as sugars, but not via the direct glass transition of CAHS proteins themselves. This chain is Cytosolic-abundant heat soluble protein 89226, found in Hypsibius exemplaris (Freshwater tardigrade).